The chain runs to 328 residues: Phosphate acetyltransferase (328 aa).

Belongs to the phosphate acetyltransferase and butyryltransferase family.

It localises to the cytoplasm. The catalysed reaction is acetyl-CoA + phosphate = acetyl phosphate + CoA. Its pathway is metabolic intermediate biosynthesis; acetyl-CoA biosynthesis; acetyl-CoA from acetate: step 2/2. This chain is Phosphate acetyltransferase (pta), found in Staphylococcus aureus (strain MSSA476).